Consider the following 365-residue polypeptide: Solute carrier family 35 member G1 (365 aa).

The disordered stretch occupies residues 1–33 (MRPQDSTGVAELQEPGLPLTDDAPPGATEEPAA). The segment covering 23 to 33 (APPGATEEPAA) has biased composition (low complexity). Transmembrane regions (helical) follow at residues 69-89 (GLGL…SLFV), 97-117 (AVEI…PCLI), 131-151 (IFLI…YYAY), 156-176 (LADA…FAWI), 187-207 (ALFT…PFLF), 222-242 (LKGT…LVIL), 252-272 (FLSI…ILSV), 286-306 (LFLI…TKAL), 311-333 (AGPV…IIFF), and 338-357 (TWWT…GAAI). 2 EamA domains span residues 80 to 202 (FLFS…LIVR) and 233 to 357 (VFAA…GAAI).

This sequence belongs to the TMEM20 family. As to quaternary structure, interacts with STIM1; stimulated by depletion of intracellular calcium. Interacts with ORAI1. Interacts with the plasma membrane calcium-transporting ATPases ATP2B1 and ATP2B4. Interacts with ATP1A1, ATP2A2, KPNB1 and XPO1. Ubiquitously expressed.

The protein resides in the cell membrane. It localises to the endoplasmic reticulum membrane. Its function is as follows. May play a role in intracellular calcium sensing and homeostasis. May act as a negative regulator of plasma membrane calcium-transporting ATPases preventing calcium efflux from the cell. The polypeptide is Solute carrier family 35 member G1 (SLC35G1) (Homo sapiens (Human)).